Reading from the N-terminus, the 204-residue chain is MKKLLVACCVVSGMMSASVLASPSSDLQGRLNKVNSFHASFTQTVSTADGTPVQQGEGELWVKRPNLFNWHMISPDESVLVSDGKTLWFYNPFVEQVTATWLNRATGNTPFMLITRNDASDWAQYNVTQQGNTFDLVPKSAKNNLKKFTISVMPDGTINGFSAVEQDGQRSVYTLKRQQNGAVDAAKFRFTPPPGVTLDDQRQQ.

The first 21 residues, 1 to 21 (MKKLLVACCVVSGMMSASVLA), serve as a signal peptide directing secretion.

The protein belongs to the LolA family. In terms of assembly, monomer.

Its subcellular location is the periplasm. Participates in the translocation of lipoproteins from the inner membrane to the outer membrane. Only forms a complex with a lipoprotein if the residue after the N-terminal Cys is not an aspartate (The Asp acts as a targeting signal to indicate that the lipoprotein should stay in the inner membrane). In Edwardsiella ictaluri (strain 93-146), this protein is Outer-membrane lipoprotein carrier protein.